Reading from the N-terminus, the 615-residue chain is Cysteine-rich receptor-like protein kinase 1 (615 aa).

The signal sequence occupies residues 1-28; sequence MQICASIAQFLAWVSFLVLLATVGSSSS. 2 Gnk2-homologous domains span residues 29–131 and 137–237; these read SESL…DRDF and DPTF…THKF. At 29–266 the chain is on the extracellular side; it reads SESLLNCQPL…SFFPHLSDRD (238 aa). N-linked (GlcNAc...) asparagine glycans are attached at residues Asn100 and Asn165. The chain crosses the membrane as a helical span at residues 267-287; it reads VTRLAIAAISLSILTSLGAFI. The Cytoplasmic segment spans residues 288 to 615; that stretch reads SYRRVSRKRK…VLMPDEETRV (328 aa). The region spanning 318-602 is the Protein kinase domain; the sequence is FHDSMKLGQG…FEYPKQPPFL (285 aa). ATP contacts are provided by residues 324-332 and Lys346; that span reads LGQGGAGSV. Asp443 functions as the Proton acceptor in the catalytic mechanism.

This sequence belongs to the protein kinase superfamily. Ser/Thr protein kinase family. CRK subfamily. In terms of tissue distribution, expressed in the whole plant at low levels.

The protein localises to the membrane. It carries out the reaction L-seryl-[protein] + ATP = O-phospho-L-seryl-[protein] + ADP + H(+). The enzyme catalyses L-threonyl-[protein] + ATP = O-phospho-L-threonyl-[protein] + ADP + H(+). The protein is Cysteine-rich receptor-like protein kinase 1 of Arabidopsis thaliana (Mouse-ear cress).